We begin with the raw amino-acid sequence, 604 residues long: Aspartate--tRNA(Asp/Asn) ligase (604 aa).

L-aspartate is bound at residue glutamate 175. The interval 199 to 202 (QQFK) is aspartate. 2 residues coordinate L-aspartate: arginine 221 and histidine 456. 221–223 (RDE) contacts ATP. Glutamate 496 provides a ligand contact to ATP. Arginine 503 provides a ligand contact to L-aspartate. ATP is bound at residue 548–551 (GVDR).

Belongs to the class-II aminoacyl-tRNA synthetase family. Type 1 subfamily. Homodimer.

Its subcellular location is the cytoplasm. It catalyses the reaction tRNA(Asx) + L-aspartate + ATP = L-aspartyl-tRNA(Asx) + AMP + diphosphate. Aspartyl-tRNA synthetase with relaxed tRNA specificity since it is able to aspartylate not only its cognate tRNA(Asp) but also tRNA(Asn). Reaction proceeds in two steps: L-aspartate is first activated by ATP to form Asp-AMP and then transferred to the acceptor end of tRNA(Asp/Asn). This chain is Aspartate--tRNA(Asp/Asn) ligase, found in Methylobacterium nodulans (strain LMG 21967 / CNCM I-2342 / ORS 2060).